The chain runs to 347 residues: NADH-ubiquinone oxidoreductase chain 2 (347 aa).

11 helical membrane passes run 1-21 (MNPI…MIVM), 25-45 (HWLM…PILM), 60-80 (FLTQ…NLMF), 89-109 (IFNP…LGLS), 111-131 (FHFW…LILL), 149-169 (INLD…GWGG), 178-198 (IMAY…TYNP), 201-221 (TALN…LFML), 242-262 (SLIL…GFIP), 274-294 (DSII…YFYM), and 323-343 (MNFL…TPIM).

The protein belongs to the complex I subunit 2 family. In terms of assembly, core subunit of respiratory chain NADH dehydrogenase (Complex I) which is composed of 45 different subunits. Interacts with TMEM242.

It localises to the mitochondrion inner membrane. It carries out the reaction a ubiquinone + NADH + 5 H(+)(in) = a ubiquinol + NAD(+) + 4 H(+)(out). Functionally, core subunit of the mitochondrial membrane respiratory chain NADH dehydrogenase (Complex I) which catalyzes electron transfer from NADH through the respiratory chain, using ubiquinone as an electron acceptor. Essential for the catalytic activity and assembly of complex I. In Ceratotherium simum (White rhinoceros), this protein is NADH-ubiquinone oxidoreductase chain 2.